The following is a 145-amino-acid chain: Large ribosomal subunit protein bL17 (145 aa).

The protein belongs to the bacterial ribosomal protein bL17 family. In terms of assembly, part of the 50S ribosomal subunit. Contacts protein L32.

The polypeptide is Large ribosomal subunit protein bL17 (Orientia tsutsugamushi (strain Boryong) (Rickettsia tsutsugamushi)).